We begin with the raw amino-acid sequence, 143 residues long: Large ribosomal subunit protein uL16 (143 aa).

This sequence belongs to the universal ribosomal protein uL16 family. As to quaternary structure, part of the 50S ribosomal subunit.

Its function is as follows. Binds 23S rRNA and is also seen to make contacts with the A and possibly P site tRNAs. The sequence is that of Large ribosomal subunit protein uL16 from Caulobacter vibrioides (strain ATCC 19089 / CIP 103742 / CB 15) (Caulobacter crescentus).